We begin with the raw amino-acid sequence, 299 residues long: 4-hydroxybenzoate octaprenyltransferase (299 aa).

A run of 8 helical transmembrane segments spans residues 33–53, 56–76, 107–127, 151–171, 180–200, 213–233, 247–267, and 278–298; these read VGFL…ADGV, WWTL…GCVI, LLMF…MNQL, LPQV…FAAI, WLLY…YAMV, IAIL…TLML, HTYW…FIIA, and AFMH…LATT.

Belongs to the UbiA prenyltransferase family. Mg(2+) serves as cofactor.

Its subcellular location is the cell inner membrane. The enzyme catalyses all-trans-octaprenyl diphosphate + 4-hydroxybenzoate = 4-hydroxy-3-(all-trans-octaprenyl)benzoate + diphosphate. It functions in the pathway cofactor biosynthesis; ubiquinone biosynthesis. Functionally, catalyzes the prenylation of para-hydroxybenzoate (PHB) with an all-trans polyprenyl group. Mediates the second step in the final reaction sequence of ubiquinone-8 (UQ-8) biosynthesis, which is the condensation of the polyisoprenoid side chain with PHB, generating the first membrane-bound Q intermediate 3-octaprenyl-4-hydroxybenzoate. This Xylella fastidiosa (strain M12) protein is 4-hydroxybenzoate octaprenyltransferase.